The primary structure comprises 28 residues: Ranatuerin-2BYb (28 aa).

A disulfide bridge links cysteine 23 with cysteine 28.

Expressed by the skin glands.

The protein resides in the secreted. In terms of biological role, antibacterial activity against Gram-negative bacterium E.coli. Very weak hemolysis activity. The protein is Ranatuerin-2BYb of Rana boylii (Foothill yellow-legged frog).